Reading from the N-terminus, the 586-residue chain is Frizzled-10-A (586 aa).

Residues 1 to 26 (MDVSGVTGLLRGTALLLVLAAALCSA) form the signal peptide. The Extracellular segment spans residues 27 to 230 (ISSINPDRSG…DVYWSKDDKK (204 aa)). The 122-residue stretch at 35–156 (SGDGRCQAIE…NDPNYLCMEA (122 aa)) folds into the FZ domain. Cystine bridges form between Cys40-Cys101, Cys48-Cys94, Cys85-Cys123, Cys112-Cys153, and Cys116-Cys140. N-linked (GlcNAc...) asparagine glycosylation occurs at Asn54. Residue Asn159 is glycosylated (N-linked (GlcNAc...) asparagine). The disordered stretch occupies residues 161–199 (TDETPRGSSMLPPIFRPQRPSSGHEIYPKDPTSRSSCEN). Residues 231 to 251 (FAFIWIAIWSILCFFSSAFTV) traverse the membrane as a helical segment. Topologically, residues 252–267 (LTFLVDPLRFKYPERP) are cytoplasmic. A helical membrane pass occupies residues 268-288 (IIFLSMCYCVYSVGYIIRLFA). Topologically, residues 289–315 (GADSIACDRDSGQLYVIQEGLESTGCT) are extracellular. A helical transmembrane segment spans residues 316–336 (IVFLILYYFGMASSLWWVILT). Residues 337–356 (LTWFLAAGKKWGHEAIEANS) lie on the Cytoplasmic side of the membrane. A helical membrane pass occupies residues 357–377 (SYFHLAAWAIPAVKTIMILVM). Residues 378 to 401 (RRVAGDELTGVCYVGSMDVNALTG) are Extracellular-facing. A helical transmembrane segment spans residues 402-422 (FVLIPLACYLIIGTSFILSGF). Over 423-448 (VALFHIRRVMKTGGENTDKLEKLMVR) the chain is Cytoplasmic. The chain crosses the membrane as a helical span at residues 449–469 (IGVFSVLYTVPATCVIACYFY). Topologically, residues 470–507 (ERLNMDFWKILATQDKCKMDSQTKTLDCTMTSSIPAVE) are extracellular. Residues 508 to 528 (IFMVKIFMLLVVGITSGMWIW) traverse the membrane as a helical segment. Residues 529-586 (TSKTVQSWQNVFSKRLKKRNRSKPASVITSAGIYKKPQHPPKVHHGKYESALQSPTCV) are Cytoplasmic-facing. The short motif at 531 to 536 (KTVQSW) is the Lys-Thr-X-X-X-Trp motif, mediates interaction with the PDZ domain of Dvl family members element. Residues 563-586 (KKPQHPPKVHHGKYESALQSPTCV) are disordered. Basic residues predominate over residues 564-573 (KPQHPPKVHH). Positions 584–586 (TCV) match the PDZ-binding motif.

It belongs to the G-protein coupled receptor Fz/Smo family. Expressed in liver, lung, brain, testis, stomach, kidney, eye, skeletal muscle and skin.

It localises to the cell membrane. Its function is as follows. Receptor for Wnt proteins. Most of frizzled receptors are coupled to the beta-catenin canonical signaling pathway, which leads to the activation of disheveled proteins, inhibition of GSK-3 kinase, nuclear accumulation of beta-catenin and activation of Wnt target genes. A second signaling pathway involving PKC and calcium fluxes has been seen for some family members, but it is not yet clear if it represents a distinct pathway or if it can be integrated in the canonical pathway, as PKC seems to be required for Wnt-mediated inactivation of GSK-3 kinase. Both pathways seem to involve interactions with G-proteins. May be involved in transduction and intercellular transmission of polarity information during tissue morphogenesis and/or in differentiated tissues. Activated by Wnt8. Could have an antagonizing activity in the morphogenesis during development. This chain is Frizzled-10-A (fzd10-a), found in Xenopus laevis (African clawed frog).